The primary structure comprises 536 residues: Membrane protein insertase YidC (536 aa).

Transmembrane regions (helical) follow at residues 3 to 23 (LQRN…WKTW), 346 to 366 (ICGN…GITF), 417 to 437 (GGCF…YMLI), 454 to 474 (LSDQ…MFFI), and 494 to 514 (IPIL…LYYL).

The protein belongs to the OXA1/ALB3/YidC family. Type 1 subfamily. As to quaternary structure, interacts with the Sec translocase complex via SecD. Specifically interacts with transmembrane segments of nascent integral membrane proteins during membrane integration.

The protein resides in the cell membrane. Its function is as follows. Required for the insertion and/or proper folding and/or complex formation of integral membrane proteins into the membrane. Involved in integration of membrane proteins that insert both dependently and independently of the Sec translocase complex, as well as at least some lipoproteins. Aids folding of multispanning membrane proteins. This Buchnera aphidicola subsp. Baizongia pistaciae (strain Bp) protein is Membrane protein insertase YidC.